A 222-amino-acid polypeptide reads, in one-letter code: MRLILLGAPGAGKGTQAKFICERFGIPQISTGDMLRAAVKAGTPLGIEAKKVMDAGGLVSDDIIIGLVKDRLQQSDCKNGYLFDGFPRTIPQAEAMKDAGVPIDYVLEIDVPFDAIIERMSGRRVHVASGRTYHVKYNPPKNEGQDDETGDPLIQRDDDKEETVRKRLSVYENQTRPLVDYYSGWAENGNGAAKVAPPKYRKISGIGNVEDITGRVFGALEA.

Position 10–15 (10–15) interacts with ATP; sequence GAGKGT. The interval 30 to 59 is NMP; it reads STGDMLRAAVKAGTPLGIEAKKVMDAGGLV. AMP is bound by residues threonine 31, arginine 36, 57 to 59, 85 to 88, and glutamine 92; these read GLV and GFPR. Positions 122–159 are LID; that stretch reads GRRVHVASGRTYHVKYNPPKNEGQDDETGDPLIQRDDD. Residues arginine 123 and 132–133 contribute to the ATP site; that span reads TY. The segment at 135–162 is disordered; it reads VKYNPPKNEGQDDETGDPLIQRDDDKEE. Positions 156 and 167 each coordinate AMP. Residue glycine 207 participates in ATP binding.

The protein belongs to the adenylate kinase family. As to quaternary structure, monomer.

Its subcellular location is the cytoplasm. It carries out the reaction AMP + ATP = 2 ADP. It functions in the pathway purine metabolism; AMP biosynthesis via salvage pathway; AMP from ADP: step 1/1. Catalyzes the reversible transfer of the terminal phosphate group between ATP and AMP. Plays an important role in cellular energy homeostasis and in adenine nucleotide metabolism. The chain is Adenylate kinase from Ralstonia nicotianae (strain ATCC BAA-1114 / GMI1000) (Ralstonia solanacearum).